The primary structure comprises 365 residues: Spermine synthase (365 aa).

A2 is modified (N-acetylalanine). The residue at position 57 (S57) is a Phosphoserine. In terms of domain architecture, PABS spans 121–361 (RYWPTADGRL…ELWVFYTVWK (241 aa)). Position 147 (Q147) interacts with S-adenosyl 3-(methylsulfanyl)propylamine. 2 residues coordinate spermidine: Y176 and D200. Residues E219 and 254-255 (DC) each bind S-adenosyl 3-(methylsulfanyl)propylamine. The Proton acceptor role is filled by D275. Positions 350 and 352 each coordinate spermidine.

The protein belongs to the spermidine/spermine synthase family. As to quaternary structure, homodimer. Dimerization is mediated through the N-terminal domain and seems to be required for activity as deletion of the N-terminal domain causes complete loss of activity.

The catalysed reaction is S-adenosyl 3-(methylsulfanyl)propylamine + spermidine = spermine + S-methyl-5'-thioadenosine + H(+). It participates in amine and polyamine biosynthesis; spermine biosynthesis; spermine from spermidine: step 1/1. Its function is as follows. Catalyzes the production of spermine from spermidine and decarboxylated S-adenosylmethionine (dcSAM). This Bos taurus (Bovine) protein is Spermine synthase (SMS).